The chain runs to 271 residues: Putative pyruvate, phosphate dikinase regulatory protein 2 (271 aa).

Residue 151-158 (GVSRTSKT) coordinates ADP.

Belongs to the pyruvate, phosphate/water dikinase regulatory protein family. PDRP subfamily.

The catalysed reaction is N(tele)-phospho-L-histidyl/L-threonyl-[pyruvate, phosphate dikinase] + ADP = N(tele)-phospho-L-histidyl/O-phospho-L-threonyl-[pyruvate, phosphate dikinase] + AMP + H(+). It catalyses the reaction N(tele)-phospho-L-histidyl/O-phospho-L-threonyl-[pyruvate, phosphate dikinase] + phosphate + H(+) = N(tele)-phospho-L-histidyl/L-threonyl-[pyruvate, phosphate dikinase] + diphosphate. Functionally, bifunctional serine/threonine kinase and phosphorylase involved in the regulation of the pyruvate, phosphate dikinase (PPDK) by catalyzing its phosphorylation/dephosphorylation. This chain is Putative pyruvate, phosphate dikinase regulatory protein 2, found in Staphylococcus haemolyticus (strain JCSC1435).